We begin with the raw amino-acid sequence, 789 residues long: Trans-4-hydroxy-L-proline dehydratase (789 aa).

Positions 7–663 constitute a PFL domain; it reads ERTKKLREES…IMGASPNGRL (657 aa). Cys434 serves as the catalytic Cysteine radical intermediate. The Proton acceptor role is filled by Glu436. In terms of domain architecture, Glycine radical spans 670–789; the sequence is EGISPEKGGD…EIIGRTEQTF (120 aa). Residue Gly765 is modified to Glycine radical.

It belongs to the glycyl radical enzyme (GRE) family. HYPD subfamily. Requires the activating protein PflE to generate the key active site glycyl radical on Gly-765 that is involved in catalysis.

It catalyses the reaction trans-4-hydroxy-L-proline = (S)-1-pyrroline-5-carboxylate + H2O + H(+). Functionally, glycine radical enzyme that catalyzes the dehydration of the non-proteinogenic amino acid trans-4-hydroxy-L-proline (Hyp) to produce delta(1)-pyrroline-5-carboxylate (P5C). Is involved in the anaerobic degradation of 4-hydroxyproline. This is Trans-4-hydroxy-L-proline dehydratase from Clostridioides difficile (Peptoclostridium difficile).